The primary structure comprises 279 residues: Thiazole synthase (279 aa).

Lysine 116 (schiff-base intermediate with DXP) is an active-site residue. Residues glycine 177, alanine 203 to glycine 204, and asparagine 225 to serine 226 each bind 1-deoxy-D-xylulose 5-phosphate.

The protein belongs to the ThiG family. In terms of assembly, homotetramer. Forms heterodimers with either ThiH or ThiS.

Its subcellular location is the cytoplasm. The enzyme catalyses [ThiS sulfur-carrier protein]-C-terminal-Gly-aminoethanethioate + 2-iminoacetate + 1-deoxy-D-xylulose 5-phosphate = [ThiS sulfur-carrier protein]-C-terminal Gly-Gly + 2-[(2R,5Z)-2-carboxy-4-methylthiazol-5(2H)-ylidene]ethyl phosphate + 2 H2O + H(+). It participates in cofactor biosynthesis; thiamine diphosphate biosynthesis. In terms of biological role, catalyzes the rearrangement of 1-deoxy-D-xylulose 5-phosphate (DXP) to produce the thiazole phosphate moiety of thiamine. Sulfur is provided by the thiocarboxylate moiety of the carrier protein ThiS. In vitro, sulfur can be provided by H(2)S. The protein is Thiazole synthase of Trichodesmium erythraeum (strain IMS101).